Consider the following 84-residue polypeptide: MSVITKVAAAKNKIVVGAGLLMASAGAFAADDGTSTATSYATEAMNSLKTQATDLIDQTWPVVTSVAVAGLAIRLFKKFSSKAV.

The N-terminal stretch at 1 to 29 (MSVITKVAAAKNKIVVGAGLLMASAGAFA) is a signal peptide. Over 30-58 (ADDGTSTATSYATEAMNSLKTQATDLIDQ) the chain is Periplasmic. Residues 59–76 (TWPVVTSVAVAGLAIRLF) form a helical membrane-spanning segment. The Cytoplasmic segment spans residues 77–84 (KKFSSKAV).

The protein belongs to the inovirus capsid protein family. In terms of assembly, homomultimerizes. There are several thousands of this protein in the phage capsid.

The protein resides in the virion. The protein localises to the host membrane. Its function is as follows. Self assembles to form a helical capsid wrapping up the viral genomic DNA. The capsid displays a filamentous structure with a length of 760-1950 nm and a width of 6-8 nm. The virion assembly and budding take place at the host inner membrane. In Escherichia coli (Bacteriophage I2-2), this protein is Capsid protein G8P (VIII).